A 94-amino-acid polypeptide reads, in one-letter code: Co-chaperonin GroES (94 aa).

It belongs to the GroES chaperonin family. In terms of assembly, heptamer of 7 subunits arranged in a ring. Interacts with the chaperonin GroEL.

It localises to the cytoplasm. Its function is as follows. Together with the chaperonin GroEL, plays an essential role in assisting protein folding. The GroEL-GroES system forms a nano-cage that allows encapsulation of the non-native substrate proteins and provides a physical environment optimized to promote and accelerate protein folding. GroES binds to the apical surface of the GroEL ring, thereby capping the opening of the GroEL channel. This chain is Co-chaperonin GroES, found in Heliobacterium modesticaldum (strain ATCC 51547 / Ice1).